A 350-amino-acid chain; its full sequence is tRNA uridine(34) hydroxylase (350 aa).

In terms of domain architecture, Rhodanese spans 146–240 (DDPDALFIDM…YARKAREQGL (95 aa)). The active-site Cysteine persulfide intermediate is Cys-200.

This sequence belongs to the TrhO family.

The enzyme catalyses uridine(34) in tRNA + AH2 + O2 = 5-hydroxyuridine(34) in tRNA + A + H2O. Catalyzes oxygen-dependent 5-hydroxyuridine (ho5U) modification at position 34 in tRNAs, the first step in 5-carboxymethoxyuridine (cmo5U) biosynthesis. May be part of an alternate pathway, which is able to bypass cmo5U biogenesis in a subset of tRNAs under aerobic conditions. This Escherichia coli O127:H6 (strain E2348/69 / EPEC) protein is tRNA uridine(34) hydroxylase.